A 483-amino-acid chain; its full sequence is FAD-linked oxidoreductase easE (483 aa).

Positions 10-193 constitute an FAD-binding PCMH-type domain; it reads QGRLPLYSAV…TEATVRVFSD (184 aa).

Belongs to the oxygen-dependent FAD-linked oxidoreductase family. Requires FAD as cofactor.

It participates in alkaloid biosynthesis; ergot alkaloid biosynthesis. Its function is as follows. FAD-linked oxidoreductase; part of the gene cluster that mediates the biosynthesis of fungal ergot alkaloid. DmaW catalyzes the first step of ergot alkaloid biosynthesis by condensing dimethylallyl diphosphate (DMAP) and tryptophan to form 4-dimethylallyl-L-tryptophan. The second step is catalyzed by the methyltransferase easF that methylates 4-dimethylallyl-L-tryptophan in the presence of S-adenosyl-L-methionine, resulting in the formation of 4-dimethylallyl-L-abrine. The catalase easC and the FAD-dependent oxidoreductase easE then transform 4-dimethylallyl-L-abrine to chanoclavine-I which is further oxidized by easD in the presence of NAD(+), resulting in the formation of chanoclavine-I aldehyde. Agroclavine dehydrogenase easG then mediates the conversion of chanoclavine-I aldehyde to agroclavine via a non-enzymatic adduct reaction: the substrate is an iminium intermediate that is formed spontaneously from chanoclavine-I aldehyde in the presence of glutathione. The presence of easA is not required to complete this reaction. Further conversion of agroclavine to paspalic acid is a two-step process involving oxidation of agroclavine to elymoclavine and of elymoclavine to paspalic acid, the second step being performed by the elymoclavine oxidase cloA. Paspalic acid is then further converted to D-lysergic acid. Ergopeptines are assembled from D-lysergic acid and three different amino acids by the D-lysergyl-peptide-synthetases composed each of a monomudular and a trimodular nonribosomal peptide synthetase subunit. LpsB and lpsC encode the monomodular subunits responsible for D-lysergic acid activation and incorporation into the ergopeptine backbone. LpsA1 and A2 subunits encode the trimodular nonribosomal peptide synthetase assembling the tripeptide portion of ergopeptines. LpsA1 is responsible for formation of the major ergopeptine, ergotamine, and lpsA2 for alpha-ergocryptine, the minor ergopeptine of the total alkaloid mixture elaborated by C.purpurea. D-lysergyl-tripeptides are assembled by the nonribosomal peptide synthetases and released as N-(D-lysergyl-aminoacyl)-lactams. Cyclolization of the D-lysergyl-tripeptides is performed by the Fe(2+)/2-ketoglutarate-dependent dioxygenase easH which introduces a hydroxyl group into N-(D-lysergyl-aminoacyl)-lactam at alpha-C of the aminoacyl residue followed by spontaneous condensation with the terminal lactam carbonyl group. In Claviceps purpurea (Ergot fungus), this protein is FAD-linked oxidoreductase easE.